The chain runs to 252 residues: 14-3-3-like protein GF14 omicron (252 aa).

2 positions are modified to phosphoserine: S65 and S188.

This sequence belongs to the 14-3-3 family.

The protein resides in the nucleus. Its subcellular location is the cytoplasm. In terms of biological role, is associated with a DNA binding complex that binds to the G box, a well-characterized cis-acting DNA regulatory element found in plant genes. In Arabidopsis thaliana (Mouse-ear cress), this protein is 14-3-3-like protein GF14 omicron (GRF11).